The following is a 274-amino-acid chain: Undecaprenyl-diphosphatase 1 (274 aa).

A run of 8 helical transmembrane segments spans residues 4-24, 45-65, 84-104, 111-131, 146-166, 186-206, 217-237, and 249-269; these read LLLLKAAIMGIVEGITEFLPI, SAVFVVAIQMGAIAAVIYEYW, HLAISLILASIPIVLVGLSFG, LFNDVAVAIGLIVGGVIIMWI, IGLKQAIWIGLIQVLSLIPGT, ATEFSFFLGIPVIIGAGLLDL, FDWSVLGVGILVSFVSALLLI, and FMVFAWYRIVSGLLILLFAYT.

This sequence belongs to the UppP family.

It is found in the cell inner membrane. The catalysed reaction is di-trans,octa-cis-undecaprenyl diphosphate + H2O = di-trans,octa-cis-undecaprenyl phosphate + phosphate + H(+). Catalyzes the dephosphorylation of undecaprenyl diphosphate (UPP). Confers resistance to bacitracin. This Acinetobacter baylyi (strain ATCC 33305 / BD413 / ADP1) protein is Undecaprenyl-diphosphatase 1.